The sequence spans 247 residues: Caffeoyl-CoA O-methyltransferase 1 (247 aa).

Lys21 serves as a coordination point for substrate. S-adenosyl-L-methionine is bound by residues Thr63, Glu85, 87–88 (GV), Ser93, Asp111, and Ala140. Asp163 provides a ligand contact to substrate. Asp163 serves as a coordination point for a divalent metal cation. Asp165 is a binding site for S-adenosyl-L-methionine. Residues Asp189 and Asn190 each contribute to the a divalent metal cation site. Asn194 contributes to the substrate binding site.

This sequence belongs to the class I-like SAM-binding methyltransferase superfamily. Cation-dependent O-methyltransferase family. CCoAMT subfamily. The cofactor is a divalent metal cation.

The catalysed reaction is (E)-caffeoyl-CoA + S-adenosyl-L-methionine = (E)-feruloyl-CoA + S-adenosyl-L-homocysteine + H(+). Its pathway is aromatic compound metabolism; phenylpropanoid biosynthesis. In terms of biological role, methylates caffeoyl-CoA to feruloyl-CoA and 5-hydroxyferuloyl-CoA to sinapoyl-CoA. Plays a role in the synthesis of feruloylated polysaccharides. Involved in the reinforcement of the plant cell wall. Also involved in the responding to wounding or pathogen challenge by the increased formation of cell wall-bound ferulic acid polymers. The polypeptide is Caffeoyl-CoA O-methyltransferase 1 (CCOAOMT1) (Populus trichocarpa (Western balsam poplar)).